Here is a 251-residue protein sequence, read N- to C-terminus: MIKVSVVGAKGRMGLHVVEAVNNAEDTQLALALDAGDDLTQITTDNTDVVVEFTVPSVSLNNVLTLIGQGVDVVVGTTGWTDEKLAQVKSAIANGPKPETQKVFIAPNFAISAVLADYFATKAAKYFESAEVIELHHPTKVDAPSGTAIHTAHGIAEARKAAGLAPVPDATETDGGSRGQVVDGIHVHAVRLRGLNAHEEVLFGNAGEQLTIRADSFDRTSFMPGVLLAVRKLAGDAPAGLTIGLDHFLDL.

Residues 8 to 13 (GAKGRM), 76 to 78 (GTT), and 106 to 109 (APNF) contribute to the NAD(+) site. Residue His-136 is the Proton donor/acceptor of the active site. His-137 contacts (S)-2,3,4,5-tetrahydrodipicolinate. The active-site Proton donor is Lys-140. Residue 146-147 (GT) coordinates (S)-2,3,4,5-tetrahydrodipicolinate.

Belongs to the DapB family.

The protein localises to the cytoplasm. The catalysed reaction is (S)-2,3,4,5-tetrahydrodipicolinate + NAD(+) + H2O = (2S,4S)-4-hydroxy-2,3,4,5-tetrahydrodipicolinate + NADH + H(+). It carries out the reaction (S)-2,3,4,5-tetrahydrodipicolinate + NADP(+) + H2O = (2S,4S)-4-hydroxy-2,3,4,5-tetrahydrodipicolinate + NADPH + H(+). It functions in the pathway amino-acid biosynthesis; L-lysine biosynthesis via DAP pathway; (S)-tetrahydrodipicolinate from L-aspartate: step 4/4. Catalyzes the conversion of 4-hydroxy-tetrahydrodipicolinate (HTPA) to tetrahydrodipicolinate. This Bifidobacterium longum (strain NCC 2705) protein is 4-hydroxy-tetrahydrodipicolinate reductase.